We begin with the raw amino-acid sequence, 508 residues long: Steroid 17-alpha-hydroxylase/17,20 lyase (508 aa).

Cys445 contributes to the heme binding site.

Belongs to the cytochrome P450 family. Heme is required as a cofactor.

It is found in the membrane. The enzyme catalyses a C21-steroid + reduced [NADPH--hemoprotein reductase] + O2 = a 17alpha-hydroxy-C21-steroid + oxidized [NADPH--hemoprotein reductase] + H2O + H(+). It carries out the reaction 17alpha-hydroxyprogesterone + reduced [NADPH--hemoprotein reductase] + O2 = androst-4-ene-3,17-dione + acetate + oxidized [NADPH--hemoprotein reductase] + H2O + 2 H(+). It catalyses the reaction 17alpha-hydroxypregnenolone + reduced [NADPH--hemoprotein reductase] + O2 = 3beta-hydroxyandrost-5-en-17-one + acetate + oxidized [NADPH--hemoprotein reductase] + H2O + 2 H(+). Its pathway is lipid metabolism; steroid biosynthesis. In terms of biological role, conversion of pregnenolone and progesterone to their 17-alpha-hydroxylated products and subsequently to dehydroepiandrosterone (DHEA) and androstenedione. Catalyzes both the 17-alpha-hydroxylation and the 17,20-lyase reaction. The sequence is that of Steroid 17-alpha-hydroxylase/17,20 lyase (CYP17A1) from Gallus gallus (Chicken).